We begin with the raw amino-acid sequence, 495 residues long: Putative aldehyde dehydrogenase AldA (495 aa).

212-218 (GKGSESG) is a binding site for NAD(+). Active-site residues include Glu-256 and Cys-290.

It belongs to the aldehyde dehydrogenase family.

The enzyme catalyses an aldehyde + NAD(+) + H2O = a carboxylate + NADH + 2 H(+). In Staphylococcus aureus (strain MRSA252), this protein is Putative aldehyde dehydrogenase AldA (aldA).